The sequence spans 286 residues: 2-hydroxy-6-oxo-6-phenylhexa-2,4-dienoate hydrolase (286 aa).

Substrate-binding positions include 42 to 43, Asn-51, Asn-111, Ser-180, and Arg-190; that span reads GG. The Proton acceptor role is filled by His-265. Residue Trp-266 coordinates substrate.

Belongs to the AB hydrolase superfamily. BphD family. Homodimer.

The catalysed reaction is 2,6-dioxo-6-phenylhexa-3-enoate + H2O = 2-oxopent-4-enoate + benzoate + H(+). The protein operates within xenobiotic degradation; biphenyl degradation; 2-hydroxy-2,4-pentadienoate and benzoate from biphenyl: step 4/4. Inhibited by 3-Cl HOPDA. In terms of biological role, catalyzes an unusual C-C bond hydrolysis of 2-hydroxy-6-oxo-6-phenylhexa-2,4-dienoic acid (HOPDA) to produce benzoic acid and 2-hydroxy-2,4-pentadienoic acid (HPD). The protein is 2-hydroxy-6-oxo-6-phenylhexa-2,4-dienoate hydrolase (bphD) of Paraburkholderia xenovorans (strain LB400).